The sequence spans 297 residues: Probable lipid kinase YegS-like (297 aa).

Residues 2–131 (STFPASLLIL…IDIARVNDKT (130 aa)) form the DAGKc domain. Residues threonine 40, 66 to 72 (GDGTINE), and threonine 93 each bind ATP. Mg(2+) is bound by residues leucine 213, aspartate 216, and leucine 218. Glutamate 269 acts as the Proton acceptor in catalysis.

It belongs to the diacylglycerol/lipid kinase family. YegS lipid kinase subfamily. Mg(2+) is required as a cofactor. Requires Ca(2+) as cofactor.

It is found in the cytoplasm. Probably phosphorylates lipids; the in vivo substrate is unknown. This is Probable lipid kinase YegS-like from Klebsiella pneumoniae (strain 342).